The primary structure comprises 381 residues: MTHASNSHPVTELTKELIARPSVTPLDEGCQTLMAERLAAIGFNIEPMVFEDTTNMWARRGNEGPVFCFAGHTDVVPAGDLSRWHTPPFEPTIIDGYLYGRGAADMKGSLAAMIVATERFVAKHPNHPGSIAFLITSDEEGPFINGTTRVIDTLEARNEKITWALVGEPSSTLKLGDVVKNGRRGSLTANLTVKGIQGHVAYPHLADNPIHKAAPFLAELSQTHWDNGNEFFPPTSMQIANINGGTGASNVIPGTLEVMFNFRYSTEVTAEILIERVEALLTAHELDYDISWTFNGLPFLTGEGPLLDATRHAIRQITGYDTDPQTTGGTSDGRFIAPTGAKVLELGPVNATIHKVNECVKIDDLEQLALCYEVILEQLLC.

Residue histidine 72 coordinates Zn(2+). Aspartate 74 is a catalytic residue. Residue aspartate 105 participates in Zn(2+) binding. Glutamate 139 (proton acceptor) is an active-site residue. 3 residues coordinate Zn(2+): glutamate 140, glutamate 168, and histidine 354.

It belongs to the peptidase M20A family. DapE subfamily. In terms of assembly, homodimer. Zn(2+) serves as cofactor. Co(2+) is required as a cofactor.

The enzyme catalyses N-succinyl-(2S,6S)-2,6-diaminopimelate + H2O = (2S,6S)-2,6-diaminopimelate + succinate. Its pathway is amino-acid biosynthesis; L-lysine biosynthesis via DAP pathway; LL-2,6-diaminopimelate from (S)-tetrahydrodipicolinate (succinylase route): step 3/3. Functionally, catalyzes the hydrolysis of N-succinyl-L,L-diaminopimelic acid (SDAP), forming succinate and LL-2,6-diaminopimelate (DAP), an intermediate involved in the bacterial biosynthesis of lysine and meso-diaminopimelic acid, an essential component of bacterial cell walls. This chain is Succinyl-diaminopimelate desuccinylase, found in Shewanella sp. (strain MR-4).